The sequence spans 638 residues: UvrABC system protein C (638 aa).

The GIY-YIG domain maps to 20-97 (ECAGVYQMFD…IKKFQPKFNI (78 aa)). Residues 209–244 (KELQENLSKKMEELSSHMYFEEAAEIRDRIKALSYV) enclose the UVR domain.

Belongs to the UvrC family. Interacts with UvrB in an incision complex.

Its subcellular location is the cytoplasm. Its function is as follows. The UvrABC repair system catalyzes the recognition and processing of DNA lesions. UvrC both incises the 5' and 3' sides of the lesion. The N-terminal half is responsible for the 3' incision and the C-terminal half is responsible for the 5' incision. The chain is UvrABC system protein C from Rickettsia canadensis (strain McKiel).